A 218-amino-acid chain; its full sequence is NAD(P)H-quinone oxidoreductase subunit I (218 aa).

4Fe-4S ferredoxin-type domains follow at residues 55-84 and 95-124; these read GRIHYEFDKCIACEVCVRVCPINLPVVDWV and RNYSIDFGVCIFCGNCVEYCPTNCLSMTEE. [4Fe-4S] cluster-binding residues include Cys64, Cys67, Cys70, Cys74, Cys104, Cys107, Cys110, and Cys114. Positions 169-218 are disordered; sequence MDPHDVPANQPRAGQLPAEALKSLSLQQESVQGDEGESLQDASDQDQPSG. Over residues 208–218 the composition is skewed to polar residues; it reads QDASDQDQPSG.

This sequence belongs to the complex I 23 kDa subunit family. NDH-1 is composed of at least 11 different subunits. The cofactor is [4Fe-4S] cluster.

It localises to the cellular thylakoid membrane. It carries out the reaction a plastoquinone + NADH + (n+1) H(+)(in) = a plastoquinol + NAD(+) + n H(+)(out). The enzyme catalyses a plastoquinone + NADPH + (n+1) H(+)(in) = a plastoquinol + NADP(+) + n H(+)(out). In terms of biological role, NDH-1 shuttles electrons from an unknown electron donor, via FMN and iron-sulfur (Fe-S) centers, to quinones in the respiratory and/or the photosynthetic chain. The immediate electron acceptor for the enzyme in this species is believed to be plastoquinone. Couples the redox reaction to proton translocation, and thus conserves the redox energy in a proton gradient. This chain is NAD(P)H-quinone oxidoreductase subunit I, found in Prochlorococcus marinus (strain MIT 9313).